The following is a 1318-amino-acid chain: DNA-directed RNA polymerase subunit beta' (1318 aa).

Residues Cys221, Cys295, Cys302, and Cys305 each coordinate Zn(2+).

This sequence belongs to the RNA polymerase beta' chain family. RpoC2 subfamily. In terms of assembly, in cyanobacteria the RNAP catalytic core is composed of 2 alpha, 1 beta, 1 beta', 1 gamma and 1 omega subunit. When a sigma factor is associated with the core the holoenzyme is formed, which can initiate transcription. Zn(2+) serves as cofactor.

The catalysed reaction is RNA(n) + a ribonucleoside 5'-triphosphate = RNA(n+1) + diphosphate. DNA-dependent RNA polymerase catalyzes the transcription of DNA into RNA using the four ribonucleoside triphosphates as substrates. This is DNA-directed RNA polymerase subunit beta' from Synechococcus sp. (strain ATCC 27144 / PCC 6301 / SAUG 1402/1) (Anacystis nidulans).